The primary structure comprises 395 residues: S-adenosylmethionine synthase (395 aa).

Position 12 (H12) interacts with ATP. Position 14 (D14) interacts with Mg(2+). A K(+)-binding site is contributed by E40. The L-methionine site is built by E53 and Q96. The segment at 96–106 (QSKEIADAVNF) is flexible loop. ATP-binding positions include 174–176 (DGK), 242–243 (RF), D251, 257–258 (RK), A274, and K278. D251 provides a ligand contact to L-methionine. K282 serves as a coordination point for L-methionine.

This sequence belongs to the AdoMet synthase family. In terms of assembly, homotetramer; dimer of dimers. Mg(2+) serves as cofactor. K(+) is required as a cofactor.

The protein resides in the cytoplasm. It carries out the reaction L-methionine + ATP + H2O = S-adenosyl-L-methionine + phosphate + diphosphate. It functions in the pathway amino-acid biosynthesis; S-adenosyl-L-methionine biosynthesis; S-adenosyl-L-methionine from L-methionine: step 1/1. Functionally, catalyzes the formation of S-adenosylmethionine (AdoMet) from methionine and ATP. The overall synthetic reaction is composed of two sequential steps, AdoMet formation and the subsequent tripolyphosphate hydrolysis which occurs prior to release of AdoMet from the enzyme. This Tropheryma whipplei (strain TW08/27) (Whipple's bacillus) protein is S-adenosylmethionine synthase.